A 354-amino-acid chain; its full sequence is 3'-5' exonuclease (354 aa).

Residues Met1–Lys120 form a disordered region. Over residues Lys13–Ala50 the composition is skewed to basic and acidic residues. Positions Thr59–Arg70 are enriched in basic residues. Positions Lys71–Pro91 are enriched in basic and acidic residues. A phosphoserine mark is found at Ser104, Ser110, and Ser112. The 3'-5' exonuclease domain maps to Trp149 to Arg314. Positions 163, 165, and 301 each coordinate Mg(2+).

It belongs to the WRNexo family.

The protein localises to the nucleus. In terms of biological role, has exonuclease activity on both single-stranded and duplex templates bearing overhangs, but not blunt ended duplex DNA, and cleaves in a 3'-5' direction. Essential for the formation of DNA replication focal centers. Has an important role in maintaining genome stability. The sequence is that of 3'-5' exonuclease from Drosophila sechellia (Fruit fly).